The primary structure comprises 454 residues: DNA primase small subunit (454 aa).

Catalysis depends on residues Glu66, Asp131, and Asp133. Mg(2+) is bound by residues Asp131 and Asp133. Mn(2+)-binding residues include Asp131 and Asp133. 131-133 contributes to the a ribonucleoside 5'-triphosphate binding site; sequence DID. Residues Cys143, Cys144, Cys150, and Cys153 each contribute to the Zn(2+) site. The Zinc knuckle motif motif lies at 143–153; sequence CCSKTNICEKC. 182-188 serves as a coordination point for a ribonucleoside 5'-triphosphate; sequence SGRRGIH. Residue Asp333 participates in Mg(2+) binding. Asp333 contributes to the Mn(2+) binding site. 342-345 contributes to the a ribonucleoside 5'-triphosphate binding site; it reads HLLK. Residues 385–420 form a disordered region; it reads DKNSQNDNGHGPTMETNTTENQKDNARGQSNKGHGF. Polar residues-rich tracts occupy residues 389–404 and 411–420; these read QNDN…NTTE and RGQSNKGHGF.

The protein belongs to the eukaryotic-type primase small subunit family. Heterodimer of a catalytic subunit spp1/pri1 and a regulatory subunit spp2/pri2, also known as the DNA primase complex. Component of the alpha DNA polymerase complex (also known as the alpha DNA polymerase-primase complex) consisting of four subunits: the catalytic subunit pol1, the accessory subunit spb70/pol12, and the primase complex subunits spp1/pri1 and spp2/pri2 respectively. Mg(2+) is required as a cofactor. It depends on Mn(2+) as a cofactor.

Its subcellular location is the nucleus. It carries out the reaction ssDNA + n NTP = ssDNA/pppN(pN)n-1 hybrid + (n-1) diphosphate.. Its function is as follows. Catalytic subunit of the DNA primase complex and component of the DNA polymerase alpha complex (also known as the alpha DNA polymerase-primase complex - primosome/replisome) which play an essential role in the initiation of DNA synthesis. During the S phase of the cell cycle, the DNA polymerase alpha complex (composed of a catalytic subunit pol1, an accessory subunit spb70/pol12 and two primase subunits, the catalytic subunit spp1/pri1 and the regulatory subunit spp2/pri2) is recruited to DNA at the replicative forks. The primase subunit of the polymerase alpha complex initiates DNA synthesis by oligomerising short RNA primers on both leading and lagging strands. This is DNA primase small subunit from Schizosaccharomyces pombe (strain 972 / ATCC 24843) (Fission yeast).